A 689-amino-acid polypeptide reads, in one-letter code: Glycine--tRNA ligase beta subunit (689 aa).

This sequence belongs to the class-II aminoacyl-tRNA synthetase family. As to quaternary structure, tetramer of two alpha and two beta subunits.

Its subcellular location is the cytoplasm. The enzyme catalyses tRNA(Gly) + glycine + ATP = glycyl-tRNA(Gly) + AMP + diphosphate. The chain is Glycine--tRNA ligase beta subunit from Shewanella sp. (strain W3-18-1).